The chain runs to 461 residues: Bifunctional protein HldE (461 aa).

The ribokinase stretch occupies residues 1–315 (MKKILVIGDL…LILNQTHPKI (315 aa)). Residue 191-194 (NRTE) participates in ATP binding. D260 is an active-site residue. The tract at residues 332–461 (FTNGCFDLLH…IEKIKRTCND (130 aa)) is cytidylyltransferase.

In the N-terminal section; belongs to the carbohydrate kinase PfkB family. The protein in the C-terminal section; belongs to the cytidylyltransferase family. Homodimer.

The catalysed reaction is D-glycero-beta-D-manno-heptose 7-phosphate + ATP = D-glycero-beta-D-manno-heptose 1,7-bisphosphate + ADP + H(+). It carries out the reaction D-glycero-beta-D-manno-heptose 1-phosphate + ATP + H(+) = ADP-D-glycero-beta-D-manno-heptose + diphosphate. It functions in the pathway nucleotide-sugar biosynthesis; ADP-L-glycero-beta-D-manno-heptose biosynthesis; ADP-L-glycero-beta-D-manno-heptose from D-glycero-beta-D-manno-heptose 7-phosphate: step 1/4. Its pathway is nucleotide-sugar biosynthesis; ADP-L-glycero-beta-D-manno-heptose biosynthesis; ADP-L-glycero-beta-D-manno-heptose from D-glycero-beta-D-manno-heptose 7-phosphate: step 3/4. It participates in bacterial outer membrane biogenesis; LPS core biosynthesis. In terms of biological role, catalyzes the phosphorylation of D-glycero-D-manno-heptose 7-phosphate at the C-1 position to selectively form D-glycero-beta-D-manno-heptose-1,7-bisphosphate. Functionally, catalyzes the ADP transfer from ATP to D-glycero-beta-D-manno-heptose 1-phosphate, yielding ADP-D-glycero-beta-D-manno-heptose. This chain is Bifunctional protein HldE, found in Helicobacter pylori (strain ATCC 700392 / 26695) (Campylobacter pylori).